A 293-amino-acid chain; its full sequence is 4-hydroxy-tetrahydrodipicolinate synthase (293 aa).

Threonine 44 is a pyruvate binding site. The Proton donor/acceptor role is filled by tyrosine 132. Catalysis depends on lysine 160, which acts as the Schiff-base intermediate with substrate. Isoleucine 202 lines the pyruvate pocket.

Belongs to the DapA family. As to quaternary structure, homotetramer; dimer of dimers.

Its subcellular location is the cytoplasm. The enzyme catalyses L-aspartate 4-semialdehyde + pyruvate = (2S,4S)-4-hydroxy-2,3,4,5-tetrahydrodipicolinate + H2O + H(+). It functions in the pathway amino-acid biosynthesis; L-lysine biosynthesis via DAP pathway; (S)-tetrahydrodipicolinate from L-aspartate: step 3/4. Its function is as follows. Catalyzes the condensation of (S)-aspartate-beta-semialdehyde [(S)-ASA] and pyruvate to 4-hydroxy-tetrahydrodipicolinate (HTPA). This chain is 4-hydroxy-tetrahydrodipicolinate synthase, found in Pelagibacter ubique (strain HTCC1062).